The sequence spans 473 residues: Rop guanine nucleotide exchange factor 3 (473 aa).

Residues 1 to 28 (MENLSNPDENDDHQSPRSIDQNDQSAVE) form a disordered region. Residues 16-28 (PRSIDQNDQSAVE) are compositionally biased toward polar residues. A PRONE domain is found at 95 to 473 (LVVQEISEPE…YVDKTMRGSE (379 aa)).

Guanine-nucleotide exchange factor (GEF) that acts as an activator of Rop (Rho of plants) GTPases by promoting the exchange of GDP for GTP. The protein is Rop guanine nucleotide exchange factor 3 (ROPGEF3) of Arabidopsis thaliana (Mouse-ear cress).